We begin with the raw amino-acid sequence, 86 residues long: YcgL domain-containing protein XOO0428 (86 aa).

One can recognise a YcgL domain in the interval Met-1 to Cys-83.

This is YcgL domain-containing protein XOO0428 from Xanthomonas oryzae pv. oryzae (strain MAFF 311018).